The following is a 963-amino-acid chain: Protocadherin alpha-C1 (963 aa).

The N-terminal stretch at 1–18 (MVGWGVAVLCLWVSCGAA) is a signal peptide. 5 Cadherin domains span residues 19-124 (AGQL…SPLF), 125-233 (PAGD…APVF), 234-340 (ERSV…APEL), 349-445 (VPED…TPSF), and 446-555 (PQPQ…YPVI). At 19–683 (AGQLEYSVPE…GGQLSAQNLY (665 aa)) the chain is on the extracellular side. An N-linked (GlcNAc...) asparagine glycan is attached at asparagine 38. 2 N-linked (GlcNAc...) asparagine glycosylation sites follow: asparagine 248 and asparagine 274. Asparagine 562 is a glycosylation site (N-linked (GlcNAc...) asparagine). A Cadherin 6 domain is found at 570–667 (VPRSARTGHL…NSVPQLLPDF (98 aa)). The helical transmembrane segment at 684 to 704 (LVIALACISFLFLGCLLFFVC) threads the bilayer. Residues 705-963 (TKLHQSPGCC…GNSTTDNSDQ (259 aa)) lie on the Cytoplasmic side of the membrane. PXXP repeat units lie at residues 812–815 (PRQP), 845–848 (PGGP), 886–889 (PGNP), and 904–907 (PGSP). A 4 X 4 AA repeats of P-X-X-P region spans residues 812–907 (PRQPNPDWRY…PDKFIIPGSP (96 aa)). The segment at 844-902 (GPGGPDQQWPTVSSATPEPEAGEVSPPVGAGVNSNSWTFKYGPGNPKQSGPGELPDKFI) is disordered. The disordered stretch occupies residues 914–963 (QEPANSQIDKSDFITFGKKEETKKKKKKKKGNKTQEKKEKGNSTTDNSDQ). Positions 922-936 (DKSDFITFGKKEETK) are enriched in basic and acidic residues.

Its subcellular location is the cell membrane. In terms of biological role, potential calcium-dependent cell-adhesion protein. May be involved in the establishment and maintenance of specific neuronal connections in the brain. The sequence is that of Protocadherin alpha-C1 (PCDHAC1) from Pan troglodytes (Chimpanzee).